Reading from the N-terminus, the 605-residue chain is NADH-ubiquinone oxidoreductase chain 5 (605 aa).

The next 16 membrane-spanning stretches (helical) occupy residues 11 to 31, 49 to 69, 77 to 97, 120 to 140, 141 to 161, 178 to 198, 202 to 222, 244 to 264, 273 to 295, 302 to 322, 325 to 345, 371 to 391, 408 to 425, 457 to 477, 488 to 508, and 584 to 604; these read ILITELLILALSALMTMLPPI, LSLTSILIHILIEEPSSISSL, LAMSIKIDYYSLIFISIALFI, MFLLLFLMSMIMFIAANNFFP, MLVGWGTMGLMSYLLISWWHG, LADIGFILTFSWCITYMSSLD, FFATSTLVTGVPILGMLMAAM, VSALLHSSTMVTAGVYLLIGM, GFSEACLTMGAATALYASFKALL, IIAFSTLSQLGFMMATVGLNH, LAFMHLCMHAFFKAMMFLCAG, ASCFTLSTLALAGFPFLTGFF, LWATMLLISTMFTAIYSL, LALASIVTGSLFSLFTPPIYT, LAALTLTFMSAFLAMYLISLA, and IKTYFMAFLVTFVIILYIMLF.

This sequence belongs to the complex I subunit 5 family.

It localises to the mitochondrion inner membrane. It catalyses the reaction a ubiquinone + NADH + 5 H(+)(in) = a ubiquinol + NAD(+) + 4 H(+)(out). Core subunit of the mitochondrial membrane respiratory chain NADH dehydrogenase (Complex I) that is believed to belong to the minimal assembly required for catalysis. Complex I functions in the transfer of electrons from NADH to the respiratory chain. The immediate electron acceptor for the enzyme is believed to be ubiquinone. The chain is NADH-ubiquinone oxidoreductase chain 5 (MT-ND5) from Pelomedusa subrufa (African side-necked turtle).